The sequence spans 622 residues: DNA topoisomerase 3 (622 aa).

The 147-residue stretch at 2-148 (RVLCVAEKNS…SIQVIRADFN (147 aa)) folds into the Toprim domain. In terms of domain architecture, Topo IA-type catalytic spans 166–596 (SKNAADAVDA…MILTQFRDVF (431 aa)). Residue tyrosine 330 is the O-(5'-phospho-DNA)-tyrosine intermediate of the active site.

The protein belongs to the type IA topoisomerase family. In terms of assembly, interacts with hus2.

The enzyme catalyses ATP-independent breakage of single-stranded DNA, followed by passage and rejoining.. In terms of biological role, releases the supercoiling and torsional tension of DNA introduced during the DNA replication and transcription by transiently cleaving and rejoining one strand of the DNA duplex. Introduces a single-strand break via transesterification at a target site in duplex DNA. The scissile phosphodiester is attacked by the catalytic tyrosine of the enzyme, resulting in the formation of a DNA-(5'-phosphotyrosyl)-enzyme intermediate and the expulsion of a 3'-OH DNA strand. The free DNA strand than undergoes passage around the unbroken strand thus removing DNA supercoils. Finally, in the religation step, the DNA 3'-OH attacks the covalent intermediate to expel the active-site tyrosine and restore the DNA phosphodiester backbone. This Schizosaccharomyces pombe (strain 972 / ATCC 24843) (Fission yeast) protein is DNA topoisomerase 3 (top3).